The primary structure comprises 435 residues: Gamma-glutamyl phosphate reductase (435 aa).

Belongs to the gamma-glutamyl phosphate reductase family.

The protein localises to the cytoplasm. The catalysed reaction is L-glutamate 5-semialdehyde + phosphate + NADP(+) = L-glutamyl 5-phosphate + NADPH + H(+). It functions in the pathway amino-acid biosynthesis; L-proline biosynthesis; L-glutamate 5-semialdehyde from L-glutamate: step 2/2. Its function is as follows. Catalyzes the NADPH-dependent reduction of L-glutamate 5-phosphate into L-glutamate 5-semialdehyde and phosphate. The product spontaneously undergoes cyclization to form 1-pyrroline-5-carboxylate. This Nostoc punctiforme (strain ATCC 29133 / PCC 73102) protein is Gamma-glutamyl phosphate reductase.